The chain runs to 128 residues: Holo-[acyl-carrier-protein] synthase (128 aa).

Mg(2+)-binding residues include Asp-8 and Glu-60.

It belongs to the P-Pant transferase superfamily. AcpS family. It depends on Mg(2+) as a cofactor.

The protein localises to the cytoplasm. It carries out the reaction apo-[ACP] + CoA = holo-[ACP] + adenosine 3',5'-bisphosphate + H(+). Its function is as follows. Transfers the 4'-phosphopantetheine moiety from coenzyme A to a Ser of acyl-carrier-protein. The chain is Holo-[acyl-carrier-protein] synthase from Anaeromyxobacter sp. (strain K).